The following is a 159-amino-acid chain: Endoribonuclease YbeY (159 aa).

The Zn(2+) site is built by His-124, His-128, and His-134.

It belongs to the endoribonuclease YbeY family. The cofactor is Zn(2+).

It is found in the cytoplasm. Functionally, single strand-specific metallo-endoribonuclease involved in late-stage 70S ribosome quality control and in maturation of the 3' terminus of the 16S rRNA. The chain is Endoribonuclease YbeY from Halalkalibacterium halodurans (strain ATCC BAA-125 / DSM 18197 / FERM 7344 / JCM 9153 / C-125) (Bacillus halodurans).